Here is a 232-residue protein sequence, read N- to C-terminus: Golgi SNAP receptor complex member 1 (232 aa).

The Cytoplasmic portion of the chain corresponds to Met-1–Asp-211. 2 coiled-coil regions span residues Tyr-6–Lys-23 and Gly-52–Leu-80. The chain crosses the membrane as a helical; Anchor for type IV membrane protein span at residues Ser-212–Asn-232.

The protein belongs to the GOSR1 family. In terms of assembly, component of several multiprotein Golgi SNARE complexes.

Its subcellular location is the golgi apparatus membrane. Involved in transport from the ER to the Golgi apparatus as well as in intra-Golgi transport. It belongs to a super-family of proteins called t-SNAREs or soluble NSF (N-ethylmaleimide-sensitive factor) attachment protein receptor. In Drosophila melanogaster (Fruit fly), this protein is Golgi SNAP receptor complex member 1 (Gos28).